The following is a 142-amino-acid chain: Large ribosomal subunit protein uL13 (142 aa).

The protein belongs to the universal ribosomal protein uL13 family. Part of the 50S ribosomal subunit.

This protein is one of the early assembly proteins of the 50S ribosomal subunit, although it is not seen to bind rRNA by itself. It is important during the early stages of 50S assembly. This chain is Large ribosomal subunit protein uL13, found in Yersinia pseudotuberculosis serotype O:1b (strain IP 31758).